The sequence spans 703 residues: UvrABC system protein B (703 aa).

The 387-residue stretch at 33 to 419 (ERIENGENDV…SDGVVEQIIR (387 aa)) folds into the Helicase ATP-binding domain. An ATP-binding site is contributed by 46 to 53 (GATGTGKT). The Beta-hairpin motif lies at 99–122 (YYDYYQPEAYIPQTDTYIEKDSNI). The Helicase C-terminal domain occupies 436–589 (QIDDLLAEIK…QIAYNQEHGI (154 aa)). The 36-residue stretch at 659–694 (ADLIRQLSEQMHTAAEQLQFELAARLRDEIRDLKKE) folds into the UVR domain.

It belongs to the UvrB family. In terms of assembly, forms a heterotetramer with UvrA during the search for lesions. Interacts with UvrC in an incision complex.

Its subcellular location is the cytoplasm. Its function is as follows. The UvrABC repair system catalyzes the recognition and processing of DNA lesions. A damage recognition complex composed of 2 UvrA and 2 UvrB subunits scans DNA for abnormalities. Upon binding of the UvrA(2)B(2) complex to a putative damaged site, the DNA wraps around one UvrB monomer. DNA wrap is dependent on ATP binding by UvrB and probably causes local melting of the DNA helix, facilitating insertion of UvrB beta-hairpin between the DNA strands. Then UvrB probes one DNA strand for the presence of a lesion. If a lesion is found the UvrA subunits dissociate and the UvrB-DNA preincision complex is formed. This complex is subsequently bound by UvrC and the second UvrB is released. If no lesion is found, the DNA wraps around the other UvrB subunit that will check the other stand for damage. The chain is UvrABC system protein B from Bifidobacterium longum (strain NCC 2705).